The primary structure comprises 1225 residues: DNA-directed RNA polymerase subunit beta' (1225 aa).

Zn(2+)-binding residues include C60, C62, C75, and C78. Positions 450, 452, and 454 each coordinate Mg(2+). Positions 818, 892, 899, and 902 each coordinate Zn(2+).

It belongs to the RNA polymerase beta' chain family. In terms of assembly, the RNAP catalytic core consists of 2 alpha, 1 beta, 1 beta' and 1 omega subunit. When a sigma factor is associated with the core the holoenzyme is formed, which can initiate transcription. Mg(2+) serves as cofactor. It depends on Zn(2+) as a cofactor.

The catalysed reaction is RNA(n) + a ribonucleoside 5'-triphosphate = RNA(n+1) + diphosphate. Functionally, DNA-dependent RNA polymerase catalyzes the transcription of DNA into RNA using the four ribonucleoside triphosphates as substrates. This is DNA-directed RNA polymerase subunit beta' from Streptococcus pneumoniae (strain Hungary19A-6).